The following is a 555-amino-acid chain: Glucose-6-phosphate isomerase (555 aa).

D-glucose 6-phosphate is bound by residues 169–170, 219–224, Q364, E368, H399, and K521; these read GS and SKTFTT. E368 functions as the Proton donor in the catalytic mechanism. Active-site residues include H399 and K521.

Belongs to the GPI family. Homodimer.

Its subcellular location is the cytoplasm. The protein resides in the cytosol. It catalyses the reaction alpha-D-glucose 6-phosphate = beta-D-fructose 6-phosphate. It participates in carbohydrate degradation; glycolysis; D-glyceraldehyde 3-phosphate and glycerone phosphate from D-glucose: step 2/4. In the cytoplasm, catalyzes the conversion of glucose-6-phosphate to fructose-6-phosphate, the second step in glycolysis, and the reverse reaction during gluconeogenesis. In Candida glabrata (strain ATCC 2001 / BCRC 20586 / JCM 3761 / NBRC 0622 / NRRL Y-65 / CBS 138) (Yeast), this protein is Glucose-6-phosphate isomerase (PGI1).